Here is a 175-residue protein sequence, read N- to C-terminus: Inner membrane protein p54 (175 aa).

Residues 32 to 52 traverse the membrane as a helical segment; that stretch reads CTILVAIVVLIIIIIVLIYLF. Positions 79 to 89 are enriched in polar residues; it reads QWAGATPQPGT. Residues 79–121 are disordered; sequence QWAGATPQPGTSKPAGATTGNVGKPITDRPATDRPVTNNPVTD. The tract at residues 141-153 is interaction with host DYNLL1; sequence YTTATTQNTASQT.

It belongs to the asfivirus envelope protein p54 family. As to quaternary structure, interacts with the host light chain cytoplasmic dynein DYNLL1; this interaction is critical for intracellular microtubule-dependent virus transport toward viral factories.

It is found in the virion membrane. Its subcellular location is the host cytoplasm. It localises to the host cytoskeleton. The protein localises to the host endoplasmic reticulum membrane. In terms of biological role, inner envelope protein involved, through its interaction with host dynein, in the intracellular microtubule-dependent transport of viral capsid toward viral factories. Seems to induce caspase-3 activation and apoptosis. Plays a role in virion morphogenesis by recruiting and transforming the host ER membranes into the precursors of the viral envelope. Involved in virus attachment to the host cell. This is Inner membrane protein p54 from African swine fever virus (isolate Pig/Kenya/KEN-50/1950) (ASFV).